A 181-amino-acid polypeptide reads, in one-letter code: uncharacterized protein (181 aa).

Residues 35-175 enclose the Nudix hydrolase domain; that stretch reads LRHRCVFVWA…ARLRAWRGAS (141 aa). Residues 72 to 94 carry the Nudix box motif; it reads GGVVGAGESYDDAALREAEEELG. Mg(2+) contacts are provided by glutamate 88 and glutamate 92.

Belongs to the Nudix hydrolase family. Mg(2+) is required as a cofactor.

This is an uncharacterized protein from Streptomyces coelicolor (strain ATCC BAA-471 / A3(2) / M145).